An 86-amino-acid polypeptide reads, in one-letter code: Small ribosomal subunit protein bS20 (86 aa).

The span at 1–11 shows a compositional bias: basic residues; the sequence is MANHKSALKRA. Residues 1–27 form a disordered region; it reads MANHKSALKRARQNEERRIRNRARKTR.

This sequence belongs to the bacterial ribosomal protein bS20 family.

Binds directly to 16S ribosomal RNA. The polypeptide is Small ribosomal subunit protein bS20 (Syntrophobacter fumaroxidans (strain DSM 10017 / MPOB)).